The following is a 381-amino-acid chain: Protein palisade (381 aa).

Positions 1 to 25 (MMMHSRNRSWTLTLLALGVVLATSA) are cleaved as a signal peptide. 6 repeat units span residues 190-199 (PAAPAYEAPA), 200-209 (PPAPAYEAPA), 210-219 (PPAPAYEAPA), 220-229 (PAAPAYEAPA), 230-239 (PAAPAYEAPT), and 247-256 (PPAPAYEPPA). A 6 X 10 AA approximate tandem repeats of P-[AP]-A-P-A-Y-E-[AP]-P-[AT] region spans residues 190-256 (PAAPAYEAPA…PPAPAYEPPA (67 aa)). 2 disordered regions span residues 236–270 (EAPTTDYSAPAPPAPAYEPPASSYTQGYSQPAQPS) and 309–329 (TPTAPPPPPPPAPVYEAPSQN). The span at 311 to 321 (TAPPPPPPPAP) shows a compositional bias: pro residues.

Sulfated by pip; may be involved in embryo dorsal-ventral axis determination. Sulfation by pip may occur on covalently bound glycosaminoglycans. Post-translationally, may undergo both disulfide and non-disulfide cross-linking upon incorporation into the vitelline membrane. As to expression, present in the perivitelline space of stage 10 egg chambers and in the vitelline membrane adjacent to the oocyte in stage 13 and 14 egg chambers (at protein level).

It localises to the secreted. The protein resides in the extracellular space. It is found in the extracellular matrix. Its function is as follows. Minor protein component of the vitelline membrane. Involved in vitelline membrane biogenesis during late stages of oogenesis. Required for efficient disulfide and non-disulfide cross-linking of several vitelline membrane components. The protein is Protein palisade of Drosophila melanogaster (Fruit fly).